The primary structure comprises 332 residues: 2,3-diketo-L-gulonate reductase (332 aa).

Residue His-44 is the Proton donor of the active site. NAD(+)-binding positions include 168–174 (ITMVDMS), 224–225 (WK), and 304–306 (GHE).

Belongs to the LDH2/MDH2 oxidoreductase family. DlgD subfamily. In terms of assembly, homodimer.

It is found in the cytoplasm. The enzyme catalyses 3-dehydro-L-gulonate + NAD(+) = 2,3-dioxo-L-gulonate + NADH + H(+). It catalyses the reaction 3-dehydro-L-gulonate + NADP(+) = 2,3-dioxo-L-gulonate + NADPH + H(+). Its function is as follows. Catalyzes the reduction of 2,3-diketo-L-gulonate in the presence of NADH, to form 3-keto-L-gulonate. The polypeptide is 2,3-diketo-L-gulonate reductase (Escherichia coli O139:H28 (strain E24377A / ETEC)).